The chain runs to 495 residues: Histidine--tRNA ligase (495 aa).

Belongs to the class-II aminoacyl-tRNA synthetase family. In terms of assembly, homodimer.

The protein localises to the cytoplasm. The catalysed reaction is tRNA(His) + L-histidine + ATP = L-histidyl-tRNA(His) + AMP + diphosphate + H(+). This is Histidine--tRNA ligase from Ruegeria pomeroyi (strain ATCC 700808 / DSM 15171 / DSS-3) (Silicibacter pomeroyi).